The primary structure comprises 257 residues: MSRRADGRADDELREVRITRGFTTHPAGSVLVEFGQTRVMCTASVTEGVPAWRRDSGLGWLTAEYAMLPAATHTRSGRESVKGRVGGRTQEISRLVGRSLRACIDLAAIGENTIAIDCDVLQADGGTRTAAITGAYVALADAVTWLGAAGALADPQPISCAIAAVSVGVVDGRVRLDLPYEEDSRAEVDMNVVATDTGTLVEIQGTGEGATFPRSTLDKLLDAALAGCEQLFAVQKEALALPYPGVLPEPAEPAKRK.

Residues arginine 88 and 126-128 (GTR) each bind phosphate.

The protein belongs to the RNase PH family. As to quaternary structure, homohexameric ring arranged as a trimer of dimers.

It catalyses the reaction tRNA(n+1) + phosphate = tRNA(n) + a ribonucleoside 5'-diphosphate. Functionally, phosphorolytic 3'-5' exoribonuclease that plays an important role in tRNA 3'-end maturation. Removes nucleotide residues following the 3'-CCA terminus of tRNAs; can also add nucleotides to the ends of RNA molecules by using nucleoside diphosphates as substrates, but this may not be physiologically important. Probably plays a role in initiation of 16S rRNA degradation (leading to ribosome degradation) during starvation. The polypeptide is Ribonuclease PH (Nocardia farcinica (strain IFM 10152)).